A 466-amino-acid polypeptide reads, in one-letter code: Ribulose bisphosphate carboxylase large chain (466 aa).

N6,N6,N6-trimethyllysine is present on Lys-5. 2 residues coordinate substrate: Asn-114 and Thr-164. Catalysis depends on Lys-166, which acts as the Proton acceptor. Position 168 (Lys-168) interacts with substrate. Positions 192, 194, and 195 each coordinate Mg(2+). Position 192 is an N6-carboxylysine (Lys-192). His-285 (proton acceptor) is an active-site residue. 3 residues coordinate substrate: Arg-286, His-318, and Ser-370.

Belongs to the RuBisCO large chain family. Type I subfamily. As to quaternary structure, heterohexadecamer of 8 large chains and 8 small chains; disulfide-linked. The disulfide link is formed within the large subunit homodimers. Mg(2+) serves as cofactor. Post-translationally, the disulfide bond which can form in the large chain dimeric partners within the hexadecamer appears to be associated with oxidative stress and protein turnover.

The protein localises to the plastid. It localises to the chloroplast. The catalysed reaction is 2 (2R)-3-phosphoglycerate + 2 H(+) = D-ribulose 1,5-bisphosphate + CO2 + H2O. The enzyme catalyses D-ribulose 1,5-bisphosphate + O2 = 2-phosphoglycolate + (2R)-3-phosphoglycerate + 2 H(+). RuBisCO catalyzes two reactions: the carboxylation of D-ribulose 1,5-bisphosphate, the primary event in carbon dioxide fixation, as well as the oxidative fragmentation of the pentose substrate in the photorespiration process. Both reactions occur simultaneously and in competition at the same active site. The polypeptide is Ribulose bisphosphate carboxylase large chain (Averrhoa carambola (Star fruit)).